A 39-amino-acid polypeptide reads, in one-letter code: Putative beta-neurotoxin (39 aa).

Positions 1–39 (GGKEGYPLNSSNGCKSGRFAGTNSNENTECKGXDAENGY) are disordered. The LCN-type CS-alpha/beta domain maps to 3 to 39 (KEGYPLNSSNGCKSGRFAGTNSNENTECKGXDAENGY). Residues 28-39 (TECKGXDAENGY) show a composition bias toward basic and acidic residues.

This sequence belongs to the long (4 C-C) scorpion toxin superfamily. Sodium channel inhibitor family. Beta subfamily. As to expression, expressed by the venom gland.

It localises to the secreted. In terms of biological role, beta toxins bind voltage-independently at site-4 of sodium channels (Nav) and shift the voltage of activation toward more negative potentials thereby affecting sodium channel activation and promoting spontaneous and repetitive firing. The sequence is that of Putative beta-neurotoxin from Tityus pachyurus (Colombian scorpion).